A 65-amino-acid chain; its full sequence is Large ribosomal subunit protein bL35 (65 aa).

Belongs to the bacterial ribosomal protein bL35 family.

The sequence is that of Large ribosomal subunit protein bL35 from Caldicellulosiruptor bescii (strain ATCC BAA-1888 / DSM 6725 / KCTC 15123 / Z-1320) (Anaerocellum thermophilum).